The sequence spans 385 residues: Rhomboid domain-containing protein 3 (385 aa).

A run of 5 helical transmembrane segments spans residues 13–33, 58–78, 93–113, 146–166, and 168–188; these read ALPL…LLGA, LGHT…TLGW, SAVL…LGLS, WLLP…PPFL, and LLCG…WLEL. The UBA domain occupies 322-361; the sequence is SVSSLRLQQLQHMGFPTEQAAVALAATGRVEGAVSLLVEG.

The protein localises to the membrane. This chain is Rhomboid domain-containing protein 3 (Rhbdd3), found in Rattus norvegicus (Rat).